The primary structure comprises 310 residues: Keratin, type II cytoskeletal 8 (310 aa).

Positions 1–38 (QRTLKVSSSGPRSFSSRSFSSGPSSRISSSSYSRVGSN) are disordered. Lys5 participates in a covalent cross-link: Glycyl lysine isopeptide (Lys-Gly) (interchain with G-Cter in SUMO2). Ser7, Ser9, Ser15, and Ser16 each carry phosphoserine. Positions 7-38 (SSSGPRSFSSRSFSSGPSSRISSSSYSRVGSN) are enriched in low complexity. Residue Arg17 is modified to Omega-N-methylarginine. 3 positions are modified to phosphoserine: Ser18, Ser21, and Ser25. At Arg26 the chain carries Omega-N-methylarginine. Residues Ser28, Ser31, and Ser33 each carry the phosphoserine modification. Position 34 is an omega-N-methylarginine (Arg34). Position 37 is a phosphoserine (Ser37). Arg42 is subject to Asymmetric dimethylarginine; alternate. At Arg42 the chain carries Omega-N-methylarginine; alternate. A coil 1A region spans residues 92–127 (EKEQIKTLNNKFASFIDKVRFLEQQNKILETKWSFL). The 219-residue stretch at 92-310 (EKEQIKTLNN…LRHTKTEISE (219 aa)) folds into the IF rod domain. N6-malonyllysine is present on Lys102. Residues Lys123 and Lys131 each participate in a glycyl lysine isopeptide (Lys-Gly) (interchain with G-Cter in SUMO2) cross-link. Residues 128–144 (QQQKTSQSNLDGLFEKY) form a linker 1 region. The tract at residues 145–236 (ITNLRRQLDS…HLYEEEIKEM (92 aa)) is coil 1B. A Glycyl lysine isopeptide (Lys-Gly) (interchain with G-Cter in SUMO1); alternate cross-link involves residue Lys198. Residue Lys198 forms a Glycyl lysine isopeptide (Lys-Gly) (interchain with G-Cter in SUMO2); alternate linkage. Lys208 bears the N6-acetyllysine mark. Tyr229 bears the Phosphotyrosine mark. Residues 237-260 (QSQISDTSVVVSMDNSRSLDLDGI) are linker 12. Phosphoserine is present on residues Ser254 and Ser275. Residues 261-310 (IADVRAQYEEIANRSRAEAETMYQIKYEELQLLAGKHGDDLRHTKTEISE) form a coil 2 region. Lys286 participates in a covalent cross-link: Glycyl lysine isopeptide (Lys-Gly) (interchain with G-Cter in SUMO2). Lys296 participates in a covalent cross-link: Glycyl lysine isopeptide (Lys-Gly) (interchain with G-Cter in SUMO2); alternate. Lys296 carries the N6-acetyllysine; alternate modification. A Glycyl lysine isopeptide (Lys-Gly) (interchain with G-Cter in SUMO2) cross-link involves residue Lys305.

It belongs to the intermediate filament family. Heterotetramer of two type I and two type II keratins. Forms a heterodimer with KRT18. Associates with KRT20. Interacts with PNN. When associated with KRT19, interacts with DMD. Interacts with APEX1. Interacts with GPER1. Interacts with EPPK1. Interacts with PKP1 and PKP2. Post-translationally, O-glycosylated. O-GlcNAcylation at multiple sites increases solubility, and decreases stability by inducing proteasomal degradation. O-glycosylated (O-GlcNAcylated), in a cell cycle-dependent manner.

The protein localises to the cytoplasm. Its subcellular location is the nucleus. It localises to the nucleoplasm. The protein resides in the nucleus matrix. Its function is as follows. Together with KRT19, helps to link the contractile apparatus to dystrophin at the costameres of striated muscle. This Potorous tridactylus (Potoroo) protein is Keratin, type II cytoskeletal 8.